The following is a 142-amino-acid chain: Large ribosomal subunit protein bL17 (142 aa).

Belongs to the bacterial ribosomal protein bL17 family. As to quaternary structure, part of the 50S ribosomal subunit. Contacts protein L32.

The sequence is that of Large ribosomal subunit protein bL17 from Bartonella henselae (strain ATCC 49882 / DSM 28221 / CCUG 30454 / Houston 1) (Rochalimaea henselae).